Here is a 545-residue protein sequence, read N- to C-terminus: Intercellular adhesion molecule 1 (545 aa).

The signal sequence occupies residues 1 to 27 (MASTRARPMLPLLLVLVAVVIPGPVGA). Residues 28–492 (QVSIHPTEAF…HLTVLYHDQN (465 aa)) lie on the Extracellular side of the membrane. 2 consecutive Ig-like C2-type domains span residues 41 to 103 (GGSV…QSSA) and 128 to 193 (GKNL…LDLR). N47 carries an N-linked (GlcNAc...) asparagine glycan. 3 cysteine pairs are disulfide-bonded: C48-C92, C52-C96, and C135-C186. N154 is a glycosylation site (N-linked (GlcNAc...) asparagine). Positions 177 to 179 (RGD) match the Cell attachment site motif. N183 and N202 each carry an N-linked (GlcNAc...) asparagine glycan. Residues 230–297 (GTQQKFLCSL…LRCVLELADQ (68 aa)) enclose the Ig-like C2-type 3 domain. Residues C237 and C290 are joined by a disulfide bond. N309, N344, N396, N417, N439, and N464 each carry an N-linked (GlcNAc...) asparagine glycan. The Ig-like C2-type 4 domain maps to 325-389 (GDQVTVKCEA…FFCSAALEVD (65 aa)). C332 and C382 are oxidised to a cystine. The disordered stretch occupies residues 343–365 (LNSTSPRPPTSQGTSPRPPTSQI). 3 cysteine pairs are disulfide-bonded: C414–C430, C430–C469, and C442–C469. The Ig-like C2-type 5 domain maps to 423–476 (GSQQTLTCQPQGNPAPNLTCSRKADGVPLPIGMVKSVKREMNGTYKCRAFSSRG). A helical transmembrane segment spans residues 493–517 (TWVIIVGVLVLIIAGFVIVASIYTY). The Cytoplasmic portion of the chain corresponds to 518–545 (YRQRKIRIYKLQKAQEEALKLKVQAPPP).

It belongs to the immunoglobulin superfamily. ICAM family. In terms of assembly, homodimer. Interacts with MUC1 and promotes cell aggregation in epithelial cells. Interacts with ARHGEF26/SGEF. Interacts (on T cell side) with CD81, CD247 and CD9 at immunological synapses between antigen-presenting cells and T cells. Monoubiquitinated, which is promoted by MARCH9 and leads to endocytosis.

It is found in the membrane. ICAM proteins are ligands for the leukocyte adhesion protein LFA-1 (integrin alpha-L/beta-2). During leukocyte trans-endothelial migration, ICAM1 engagement promotes the assembly of endothelial apical cups through ARHGEF26/SGEF and RHOG activation. The sequence is that of Intercellular adhesion molecule 1 (Icam1) from Rattus norvegicus (Rat).